The following is a 112-amino-acid chain: MVAAKKTKKSHEGINSRLALVMKSGKYTLGYKSVLKSLRSSKGKLILISSNCPPLRRSEIEYYAMLAKVGVHHYNRNNVDLGTACGKYFRVSCLSIVDPGDSDIIKSLPGDQ.

It belongs to the eukaryotic ribosomal protein eL30 family.

This chain is Large ribosomal subunit protein eL30z (RPL30A), found in Arabidopsis thaliana (Mouse-ear cress).